We begin with the raw amino-acid sequence, 424 residues long: Histidine--tRNA ligase (424 aa).

This sequence belongs to the class-II aminoacyl-tRNA synthetase family. As to quaternary structure, homodimer.

The protein localises to the cytoplasm. It catalyses the reaction tRNA(His) + L-histidine + ATP = L-histidyl-tRNA(His) + AMP + diphosphate + H(+). In Shewanella pealeana (strain ATCC 700345 / ANG-SQ1), this protein is Histidine--tRNA ligase.